The primary structure comprises 58 residues: UPF0434 protein Sfri_2386 (58 aa).

The protein belongs to the UPF0434 family.

The polypeptide is UPF0434 protein Sfri_2386 (Shewanella frigidimarina (strain NCIMB 400)).